Consider the following 120-residue polypeptide: Aspartate 1-decarboxylase (120 aa).

Serine 25 acts as the Schiff-base intermediate with substrate; via pyruvic acid in catalysis. The residue at position 25 (serine 25) is a Pyruvic acid (Ser). Threonine 57 is a binding site for substrate. The active-site Proton donor is the tyrosine 58. 73-75 contributes to the substrate binding site; it reads GAA.

The protein belongs to the PanD family. As to quaternary structure, heterooctamer of four alpha and four beta subunits. The cofactor is pyruvate. In terms of processing, is synthesized initially as an inactive proenzyme, which is activated by self-cleavage at a specific serine bond to produce a beta-subunit with a hydroxyl group at its C-terminus and an alpha-subunit with a pyruvoyl group at its N-terminus.

It localises to the cytoplasm. It catalyses the reaction L-aspartate + H(+) = beta-alanine + CO2. Its pathway is cofactor biosynthesis; (R)-pantothenate biosynthesis; beta-alanine from L-aspartate: step 1/1. Catalyzes the pyruvoyl-dependent decarboxylation of aspartate to produce beta-alanine. This is Aspartate 1-decarboxylase from Deinococcus radiodurans (strain ATCC 13939 / DSM 20539 / JCM 16871 / CCUG 27074 / LMG 4051 / NBRC 15346 / NCIMB 9279 / VKM B-1422 / R1).